A 471-amino-acid chain; its full sequence is Siroheme synthase (471 aa).

Positions 1–203 are precorrin-2 dehydrogenase /sirohydrochlorin ferrochelatase; the sequence is MDYLPLFADI…GDWESAEKTL (203 aa). NAD(+) is bound by residues 22–23 and 43–44; these read EV and KN. Residue serine 128 is modified to Phosphoserine. Residues 215–471 are uroporphyrinogen-III C-methyltransferase; that stretch reads GEIILVGAGP…DTKSSLINLA (257 aa). Residue proline 224 coordinates S-adenosyl-L-methionine. Residue aspartate 247 is the Proton acceptor of the active site. Lysine 269 acts as the Proton donor in catalysis. S-adenosyl-L-methionine contacts are provided by residues 300-302, isoleucine 305, 330-331, methionine 382, and alanine 411; these read GGD and TA.

The protein in the N-terminal section; belongs to the precorrin-2 dehydrogenase / sirohydrochlorin ferrochelatase family. In the C-terminal section; belongs to the precorrin methyltransferase family.

The catalysed reaction is uroporphyrinogen III + 2 S-adenosyl-L-methionine = precorrin-2 + 2 S-adenosyl-L-homocysteine + H(+). It catalyses the reaction precorrin-2 + NAD(+) = sirohydrochlorin + NADH + 2 H(+). The enzyme catalyses siroheme + 2 H(+) = sirohydrochlorin + Fe(2+). Its pathway is cofactor biosynthesis; adenosylcobalamin biosynthesis; precorrin-2 from uroporphyrinogen III: step 1/1. It functions in the pathway cofactor biosynthesis; adenosylcobalamin biosynthesis; sirohydrochlorin from precorrin-2: step 1/1. The protein operates within porphyrin-containing compound metabolism; siroheme biosynthesis; precorrin-2 from uroporphyrinogen III: step 1/1. It participates in porphyrin-containing compound metabolism; siroheme biosynthesis; siroheme from sirohydrochlorin: step 1/1. Its pathway is porphyrin-containing compound metabolism; siroheme biosynthesis; sirohydrochlorin from precorrin-2: step 1/1. Its function is as follows. Multifunctional enzyme that catalyzes the SAM-dependent methylations of uroporphyrinogen III at position C-2 and C-7 to form precorrin-2 via precorrin-1. Then it catalyzes the NAD-dependent ring dehydrogenation of precorrin-2 to yield sirohydrochlorin. Finally, it catalyzes the ferrochelation of sirohydrochlorin to yield siroheme. The chain is Siroheme synthase from Zymomonas mobilis subsp. mobilis (strain ATCC 31821 / ZM4 / CP4).